We begin with the raw amino-acid sequence, 328 residues long: GMP reductase (328 aa).

Cysteine 176 acts as the Thioimidate intermediate in catalysis. 205-228 (IIADGGIRTHGDIAKSIRFGASMI) is an NADP(+) binding site.

This sequence belongs to the IMPDH/GMPR family. GuaC type 2 subfamily.

The enzyme catalyses IMP + NH4(+) + NADP(+) = GMP + NADPH + 2 H(+). Its function is as follows. Catalyzes the irreversible NADPH-dependent deamination of GMP to IMP. It functions in the conversion of nucleobase, nucleoside and nucleotide derivatives of G to A nucleotides, and in maintaining the intracellular balance of A and G nucleotides. The polypeptide is GMP reductase (Streptococcus pneumoniae (strain JJA)).